Reading from the N-terminus, the 399-residue chain is Elongation factor Tu (399 aa).

One can recognise a tr-type G domain in the interval 10–209; that stretch reads KPHVNIGTIG…AVDEYIPTPE (200 aa). A G1 region spans residues 19–26; sequence GHVDHGKT. 19–26 contacts GTP; it reads GHVDHGKT. T26 is a binding site for Mg(2+). The tract at residues 60–64 is G2; that stretch reads GITIA. A G3 region spans residues 81–84; sequence DCPG. Residues 81–85 and 136–139 each bind GTP; these read DCPGH and NKED. The segment at 136 to 139 is G4; that stretch reads NKED. The segment at 174–176 is G5; the sequence is SAL.

This sequence belongs to the TRAFAC class translation factor GTPase superfamily. Classic translation factor GTPase family. EF-Tu/EF-1A subfamily. As to quaternary structure, monomer.

The protein localises to the cytoplasm. The enzyme catalyses GTP + H2O = GDP + phosphate + H(+). Functionally, GTP hydrolase that promotes the GTP-dependent binding of aminoacyl-tRNA to the A-site of ribosomes during protein biosynthesis. The polypeptide is Elongation factor Tu (Nitratiruptor sp. (strain SB155-2)).